Reading from the N-terminus, the 361-residue chain is Single-stranded DNA-binding protein 2 (361 aa).

At lysine 6 the chain carries N6-acetyllysine. One can recognise a LisH domain in the interval 18 to 50 (AREKLALYVYEYLLHVGAQKSAQTFLSEIRWEK). Disordered regions lie at residues 147 to 171 (GGVPGSQPLLPSGMDPTRQQGHPNM) and 194 to 361 (GAMR…TMSV). Residues 204–219 (GGPGMPGMNMGPGGGR) are compositionally biased toward gly residues. The segment covering 225-236 (TNANSIPYSSAS) has biased composition (polar residues). A compositionally biased stretch (pro residues) spans 246 to 256 (GGGPPGTPIMP). The span at 289 to 299 (GSDGPMGGLGG) shows a compositional bias: gly residues. The span at 317 to 332 (ISKNSPNNMSLSNQPG) shows a compositional bias: polar residues. Serine 321 is subject to Phosphoserine. Position 333 is a phosphothreonine (threonine 333). A compositionally biased stretch (polar residues) spans 346–361 (NPFQSESYSPSMTMSV).

As to expression, ubiquitous.

The protein resides in the nucleus. The sequence is that of Single-stranded DNA-binding protein 2 (SSBP2) from Homo sapiens (Human).